A 129-amino-acid polypeptide reads, in one-letter code: Small ribosomal subunit protein uS11 (129 aa).

This sequence belongs to the universal ribosomal protein uS11 family. In terms of assembly, part of the 30S ribosomal subunit. Interacts with proteins S7 and S18. Binds to IF-3.

Its function is as follows. Located on the platform of the 30S subunit, it bridges several disparate RNA helices of the 16S rRNA. Forms part of the Shine-Dalgarno cleft in the 70S ribosome. This is Small ribosomal subunit protein uS11 from Geobacillus sp. (strain WCH70).